Here is a 61-residue protein sequence, read N- to C-terminus: Metallothionein-II, hippocampal (61 aa).

Met-1 is subject to N-acetylmethionine. A beta region spans residues 1-29 (MDPNCSCATGGSCTCANSCTCKACKCASC). A divalent metal cation-binding residues include Cys-5, Cys-7, Cys-13, Cys-15, Cys-19, Cys-21, Cys-24, Cys-26, Cys-29, Cys-33, Cys-34, Cys-36, Cys-37, Cys-41, Cys-44, Cys-48, Cys-50, Cys-57, Cys-59, and Cys-60. Residues 30–61 (KKSCCSCCPVGCAKCAQGCICKGASDKCSCCA) are alpha.

This sequence belongs to the metallothionein superfamily. Type 1 family.

Its function is as follows. Metallothioneins have a high content of cysteine residues that bind various heavy metals; these proteins are transcriptionally regulated by both heavy metals and glucocorticoids. This isoform may play a role in regulating the transport, accumulation, and compartmentation of zinc in the hippocampus. The sequence is that of Metallothionein-II, hippocampal from Bos taurus (Bovine).